A 211-amino-acid chain; its full sequence is Ribosomal RNA large subunit methyltransferase E (211 aa).

Positions 55, 57, 75, 93, and 117 each coordinate S-adenosyl-L-methionine. The active-site Proton acceptor is the K157.

It belongs to the class I-like SAM-binding methyltransferase superfamily. RNA methyltransferase RlmE family.

Its subcellular location is the cytoplasm. The enzyme catalyses uridine(2552) in 23S rRNA + S-adenosyl-L-methionine = 2'-O-methyluridine(2552) in 23S rRNA + S-adenosyl-L-homocysteine + H(+). In terms of biological role, specifically methylates the uridine in position 2552 of 23S rRNA at the 2'-O position of the ribose in the fully assembled 50S ribosomal subunit. This is Ribosomal RNA large subunit methyltransferase E from Methanothermobacter thermautotrophicus (strain ATCC 29096 / DSM 1053 / JCM 10044 / NBRC 100330 / Delta H) (Methanobacterium thermoautotrophicum).